Here is a 71-residue protein sequence, read N- to C-terminus: Beta-defensin 124 (71 aa).

The signal sequence occupies residues 1 to 22 (MTQLLLFLVALLVLGHVPSGRS). 3 disulfide bridges follow: cysteine 27-cysteine 54, cysteine 34-cysteine 48, and cysteine 38-cysteine 55.

The protein belongs to the beta-defensin family.

It is found in the secreted. In terms of biological role, has antibacterial activity. In Homo sapiens (Human), this protein is Beta-defensin 124 (DEFB124).